Reading from the N-terminus, the 359-residue chain is Protein RecA (359 aa).

73–80 (GPESSGKT) provides a ligand contact to ATP.

It belongs to the RecA family.

The protein resides in the cytoplasm. Can catalyze the hydrolysis of ATP in the presence of single-stranded DNA, the ATP-dependent uptake of single-stranded DNA by duplex DNA, and the ATP-dependent hybridization of homologous single-stranded DNAs. It interacts with LexA causing its activation and leading to its autocatalytic cleavage. This Desulfovibrio desulfuricans (strain ATCC 27774 / DSM 6949 / MB) protein is Protein RecA.